The chain runs to 72 residues: uncharacterized protein (72 aa).

The helical transmembrane segment at 46 to 66 threads the bilayer; sequence AIFVFNLCFIPNLCVACIFNV.

The protein localises to the membrane. This is an uncharacterized protein from Saccharomyces cerevisiae (strain ATCC 204508 / S288c) (Baker's yeast).